Here is a 564-residue protein sequence, read N- to C-terminus: Dihydroxy-acid dehydratase (564 aa).

Residue cysteine 53 coordinates [2Fe-2S] cluster. Aspartate 85 is a binding site for Mg(2+). Cysteine 126 lines the [2Fe-2S] cluster pocket. Mg(2+) is bound by residues aspartate 127 and lysine 128. Position 128 is an N6-carboxylysine (lysine 128). Cysteine 203 provides a ligand contact to [2Fe-2S] cluster. Glutamate 454 is a Mg(2+) binding site. Serine 480 (proton acceptor) is an active-site residue.

This sequence belongs to the IlvD/Edd family. Homodimer. It depends on [2Fe-2S] cluster as a cofactor. Requires Mg(2+) as cofactor.

It carries out the reaction (2R)-2,3-dihydroxy-3-methylbutanoate = 3-methyl-2-oxobutanoate + H2O. It catalyses the reaction (2R,3R)-2,3-dihydroxy-3-methylpentanoate = (S)-3-methyl-2-oxopentanoate + H2O. It participates in amino-acid biosynthesis; L-isoleucine biosynthesis; L-isoleucine from 2-oxobutanoate: step 3/4. Its pathway is amino-acid biosynthesis; L-valine biosynthesis; L-valine from pyruvate: step 3/4. Functionally, functions in the biosynthesis of branched-chain amino acids. Catalyzes the dehydration of (2R,3R)-2,3-dihydroxy-3-methylpentanoate (2,3-dihydroxy-3-methylvalerate) into 2-oxo-3-methylpentanoate (2-oxo-3-methylvalerate) and of (2R)-2,3-dihydroxy-3-methylbutanoate (2,3-dihydroxyisovalerate) into 2-oxo-3-methylbutanoate (2-oxoisovalerate), the penultimate precursor to L-isoleucine and L-valine, respectively. The sequence is that of Dihydroxy-acid dehydratase from Mycobacterium leprae (strain TN).